Here is a 299-residue protein sequence, read N- to C-terminus: Regucalcin (299 aa).

E18 is a binding site for a divalent metal cation. Substrate-binding residues include R101, N103, and E121. Residues N154 and D204 each coordinate a divalent metal cation. The active-site Proton donor/acceptor is D204. N6-succinyllysine occurs at positions 244 and 253.

The protein belongs to the SMP-30/CGR1 family. Monomer. The cofactor is Zn(2+). Mn(2+) serves as cofactor. Requires Ca(2+) as cofactor. Mg(2+) is required as a cofactor.

The protein resides in the cytoplasm. It carries out the reaction D-glucono-1,5-lactone + H2O = D-gluconate + H(+). It participates in cofactor biosynthesis; L-ascorbate biosynthesis via UDP-alpha-D-glucuronate pathway; L-ascorbate from UDP-alpha-D-glucuronate: step 3/4. Functionally, gluconolactonase with low activity towards other sugar lactones, including gulonolactone and galactonolactone. Catalyzes a key step in ascorbic acid (vitamin C) biosynthesis. Can also hydrolyze diisopropyl phosphorofluoridate and phenylacetate (in vitro). Calcium-binding protein. Modulates Ca(2+) signaling, and Ca(2+)-dependent cellular processes and enzyme activities. The polypeptide is Regucalcin (RGN) (Sus scrofa (Pig)).